We begin with the raw amino-acid sequence, 402 residues long: Shaggy-related protein kinase GSK2 (402 aa).

The segment at 1 to 38 is disordered; it reads MDQPAPAPEPMLLDAQPPAAVACDKKQQEGEAPYAEGN. In terms of domain architecture, Protein kinase spans 63 to 347; that stretch reads YMAERVVGTG…ALDACAHPFF (285 aa). Residues 69–77 and lysine 92 contribute to the ATP site; that span reads VGTGSFGIV. The active-site Proton acceptor is aspartate 188.

The protein belongs to the protein kinase superfamily. CMGC Ser/Thr protein kinase family. GSK-3 subfamily. Interacts with DLT. Interacts with OFP8. Interacts with GRF4. Interacts with PUB24. Interacts with SMOS1. In terms of processing, autophosphorylated. Expressed in lamina joints, vascular tissue and nodes.

It is found in the cytoplasm. The protein resides in the nucleus. It carries out the reaction L-seryl-[protein] + ATP = O-phospho-L-seryl-[protein] + ADP + H(+). The enzyme catalyses L-threonyl-[protein] + ATP = O-phospho-L-threonyl-[protein] + ADP + H(+). Functionally, serine-threonine kinase that acts as a negative regulator of brassinosteroid (BR) signaling. Phosphorylates DLT and BZR1, two positive regulators that mediates several BR responses. Phosphorylation of DLT and BZR1 inhibits their activities in BR signaling. Phosphorylates OFP8, a positive regulator of BR responses. Phosphorylated OFP8 shuttles from the nucleus to the cytoplasm where it is degraded by the proteasome. Phosphorylates the E3 ubiquitin-protein ligase PUB24, a negative regulator of BR signaling, which targets BZR1 and promotes its degradation via the 26S proteasome. Phosphorylation of PUB24 increases its stability. Phosphorylates the AP2-ERF transcription factor SMOS1, a positive regulator of BR signaling, which cooperatively functions in a transactivating complex with BZR1 to enhance the transcription of BR biosynthetic genes. Phosphorylation of SMOS1 leads to its degradation by an unknown mechanism. In Oryza sativa subsp. japonica (Rice), this protein is Shaggy-related protein kinase GSK2.